Consider the following 382-residue polypeptide: Nitric oxide reductase FlRd-NAD(+) reductase (382 aa).

It belongs to the FAD-dependent oxidoreductase family. FAD serves as cofactor.

The protein localises to the cytoplasm. It carries out the reaction 2 reduced [nitric oxide reductase rubredoxin domain] + NAD(+) + H(+) = 2 oxidized [nitric oxide reductase rubredoxin domain] + NADH. The protein operates within nitrogen metabolism; nitric oxide reduction. Functionally, one of at least two accessory proteins for anaerobic nitric oxide (NO) reductase. Reduces the rubredoxin moiety of NO reductase. In Vibrio vulnificus (strain CMCP6), this protein is Nitric oxide reductase FlRd-NAD(+) reductase.